Reading from the N-terminus, the 256-residue chain is Cell division protein ZapD (256 aa).

It belongs to the ZapD family. As to quaternary structure, interacts with FtsZ.

It is found in the cytoplasm. Its function is as follows. Cell division factor that enhances FtsZ-ring assembly. Directly interacts with FtsZ and promotes bundling of FtsZ protofilaments, with a reduction in FtsZ GTPase activity. This chain is Cell division protein ZapD, found in Aromatoleum aromaticum (strain DSM 19018 / LMG 30748 / EbN1) (Azoarcus sp. (strain EbN1)).